A 206-amino-acid chain; its full sequence is Large ribosomal subunit protein uL4 (206 aa).

The tract at residues 63–85 (MYKQKGTGSARHGSARAPQFRGG) is disordered.

It belongs to the universal ribosomal protein uL4 family. In terms of assembly, part of the 50S ribosomal subunit.

Its function is as follows. One of the primary rRNA binding proteins, this protein initially binds near the 5'-end of the 23S rRNA. It is important during the early stages of 50S assembly. It makes multiple contacts with different domains of the 23S rRNA in the assembled 50S subunit and ribosome. Forms part of the polypeptide exit tunnel. This Beijerinckia indica subsp. indica (strain ATCC 9039 / DSM 1715 / NCIMB 8712) protein is Large ribosomal subunit protein uL4.